Reading from the N-terminus, the 325-residue chain is Interleukin-10 receptor subunit beta (325 aa).

Residues 1-19 (MAWSLGSWLGGCLLVSALG) form the signal peptide. Topologically, residues 20 to 220 (MVPPPENVRM…QTTHDETVPS (201 aa)) are extracellular. 2 Fibronectin type-III domains span residues 23–111 (PPEN…VDDT) and 114–216 (GPPG…THDE). 4 N-linked (GlcNAc...) asparagine glycosylation sites follow: Asn49, Asn68, Asn102, and Asn161. A disulfide bond links Cys66 and Cys74. Cysteines 188 and 209 form a disulfide. Residues 221–242 (WMVAVILMASVFMVCLALLGCF) traverse the membrane as a helical segment. Residues 243-325 (ALLWCVYKKT…GTPPGQGPQS (83 aa)) are Cytoplasmic-facing. Positions 301–325 (DSESGKQNPGDSCSLGTPPGQGPQS) are disordered. The span at 305–315 (GKQNPGDSCSL) shows a compositional bias: polar residues.

Belongs to the type II cytokine receptor family. Heterodimer with IFNLR1.

It is found in the membrane. Functionally, shared cell surface receptor required for the activation of five class 2 cytokines: IL10, IL22, IL26, IL28, and IFNL1. The IFNLR1/IL10RB dimer is a receptor for the cytokine ligands IFNL2 and IFNL3 and mediates their antiviral activity. The ligand/receptor complex stimulate the activation of the JAK/STAT signaling pathway leading to the expression of IFN-stimulated genes (ISG), which contribute to the antiviral state. In Homo sapiens (Human), this protein is Interleukin-10 receptor subunit beta (IL10RB).